A 118-amino-acid polypeptide reads, in one-letter code: C-X-C motif chemokine 17 (118 aa).

The N-terminal stretch at 1–22 (MKVLISSLLLLLPLMLMSVVSS) is a signal peptide. 2 cysteine pairs are disulfide-bonded: Cys74–Cys102 and Cys76–Cys109.

This sequence belongs to the intercrine alpha (chemokine CxC) family.

It is found in the secreted. In terms of biological role, chemokine that acts as a chemoattractant for monocytes, macrophages and dendritic cells. Plays a role in angiogenesis and possibly in the development of tumors. Acts as an anti-inflammatory in the stomach. May play a role in the innate defense against infections. Activates the C-X-C chemokine receptor GPR35 to induce a rapid and transient rise in the level of intracellular calcium ions. The chain is C-X-C motif chemokine 17 (CXCL17) from Bos taurus (Bovine).